Here is a 223-residue protein sequence, read N- to C-terminus: PKHD-type hydroxylase syc1482_d (223 aa).

One can recognise a Fe2OG dioxygenase domain in the interval Arg78 to Ser176. Fe cation-binding residues include His96, Asp98, and His157. 2-oxoglutarate is bound at residue Arg167.

Requires Fe(2+) as cofactor. L-ascorbate serves as cofactor.

The protein is PKHD-type hydroxylase syc1482_d of Synechococcus sp. (strain ATCC 27144 / PCC 6301 / SAUG 1402/1) (Anacystis nidulans).